Consider the following 85-residue polypeptide: Putative membrane protein insertion efficiency factor (85 aa).

The protein belongs to the UPF0161 family.

It localises to the cell inner membrane. Its function is as follows. Could be involved in insertion of integral membrane proteins into the membrane. This is Putative membrane protein insertion efficiency factor from Escherichia fergusonii (strain ATCC 35469 / DSM 13698 / CCUG 18766 / IAM 14443 / JCM 21226 / LMG 7866 / NBRC 102419 / NCTC 12128 / CDC 0568-73).